The following is a 114-amino-acid chain: Photosystem II reaction center Psb28 protein (114 aa).

Belongs to the Psb28 family. In terms of assembly, part of the photosystem II complex.

It localises to the cellular thylakoid membrane. The chain is Photosystem II reaction center Psb28 protein from Rippkaea orientalis (strain PCC 8801 / RF-1) (Cyanothece sp. (strain PCC 8801)).